The primary structure comprises 124 residues: Small ribosomal subunit protein uS12 (124 aa).

Asp89 carries the post-translational modification 3-methylthioaspartic acid.

Belongs to the universal ribosomal protein uS12 family. In terms of assembly, part of the 30S ribosomal subunit. Contacts proteins S8 and S17. May interact with IF1 in the 30S initiation complex.

With S4 and S5 plays an important role in translational accuracy. Its function is as follows. Interacts with and stabilizes bases of the 16S rRNA that are involved in tRNA selection in the A site and with the mRNA backbone. Located at the interface of the 30S and 50S subunits, it traverses the body of the 30S subunit contacting proteins on the other side and probably holding the rRNA structure together. The combined cluster of proteins S8, S12 and S17 appears to hold together the shoulder and platform of the 30S subunit. The polypeptide is Small ribosomal subunit protein uS12 (Buchnera aphidicola subsp. Cinara cedri (strain Cc)).